Reading from the N-terminus, the 790-residue chain is uncharacterized protein (790 aa).

Residues 37 to 172 (APVPVPVNGN…NGGVIDAKIK (136 aa)) form the TBDR plug domain. Residues 178 to 790 (DSKVKLGYRT…TFWLDVSMKF (613 aa)) enclose the TBDR beta-barrel domain.

It belongs to the TonB-dependent receptor family.

It is found in the cell outer membrane. This is an uncharacterized protein from Escherichia coli (strain K12).